A 182-amino-acid chain; its full sequence is tRNA-splicing endonuclease (182 aa).

Active-site residues include tyrosine 119, histidine 127, and lysine 158.

It belongs to the tRNA-intron endonuclease family. Archaeal short subfamily. As to quaternary structure, homotetramer; although the tetramer contains four active sites, only two participate in the cleavage. Therefore, it should be considered as a dimer of dimers.

The enzyme catalyses pretRNA = a 3'-half-tRNA molecule with a 5'-OH end + a 5'-half-tRNA molecule with a 2',3'-cyclic phosphate end + an intron with a 2',3'-cyclic phosphate and a 5'-hydroxyl terminus.. Endonuclease that removes tRNA introns. Cleaves pre-tRNA at the 5'- and 3'-splice sites to release the intron. The products are an intron and two tRNA half-molecules bearing 2',3' cyclic phosphate and 5'-OH termini. Recognizes a pseudosymmetric substrate in which 2 bulged loops of 3 bases are separated by a stem of 4 bp. The sequence is that of tRNA-splicing endonuclease from Saccharolobus islandicus (strain M.14.25 / Kamchatka #1) (Sulfolobus islandicus).